The following is a 176-amino-acid chain: Transcriptional repressor MprA (176 aa).

Residues 26 to 160 (EILLTRLCMH…LEQITRKLLS (135 aa)) enclose the HTH marR-type domain.

Its function is as follows. Negative regulator of the multidrug operon emrAB. In Escherichia coli O157:H7, this protein is Transcriptional repressor MprA (mprA).